A 400-amino-acid polypeptide reads, in one-letter code: tRNA-specific 2-thiouridylase MnmA (400 aa).

Residues 19-26 and leucine 45 each bind ATP; that span reads AMSGGVDS. Residue cysteine 113 is the Nucleophile of the active site. A disulfide bridge links cysteine 113 with cysteine 210. Glycine 137 serves as a coordination point for ATP. Positions 160–162 are interaction with tRNA; that stretch reads RDQ. Cysteine 210 functions as the Cysteine persulfide intermediate in the catalytic mechanism.

Belongs to the MnmA/TRMU family.

Its subcellular location is the cytoplasm. It carries out the reaction S-sulfanyl-L-cysteinyl-[protein] + uridine(34) in tRNA + AH2 + ATP = 2-thiouridine(34) in tRNA + L-cysteinyl-[protein] + A + AMP + diphosphate + H(+). Its function is as follows. Catalyzes the 2-thiolation of uridine at the wobble position (U34) of tRNA, leading to the formation of s(2)U34. This is tRNA-specific 2-thiouridylase MnmA from Nitrobacter winogradskyi (strain ATCC 25391 / DSM 10237 / CIP 104748 / NCIMB 11846 / Nb-255).